Consider the following 553-residue polypeptide: Aminotransferase FUM8 (553 aa).

The first 25 residues, 1-25 (MSPAPAILALRRVYNFCLLVDEAHG), serve as a signal peptide directing secretion. The N-linked (GlcNAc...) asparagine glycan is linked to Asn480.

It belongs to the class-II pyridoxal-phosphate-dependent aminotransferase family. BioF subfamily. Requires pyridoxal 5'-phosphate as cofactor.

The protein localises to the endoplasmic reticulum. It participates in mycotoxin biosynthesis. In terms of biological role, aminotransferase; part of the gene cluster that mediates the biosynthesis of fumonisins B1 (FB1), B2 (FB2), B3 (FB3), and B4 (FB4), which are carcinogenic mycotoxins. Within the pathway, FUM8 catalyzes the release of the C-18 polyketide chain from the highly reducing polyketide synthase FUM1 by a nucleophilic attack of a carbanion, which is derived from R-carbon of alanine by decarboxylation, on the carbonyl carbon of polyketide acyl chain. The biosynthesis starts with the FUM1-catalyzed carbon chain assembly from one molecule of acetyl-CoA, eight molecules of malonyl-CoA, and two molecules of methionine (in S-adenosyl form). The C18 polyketide chain is released from the enzyme by a nucleophilic attack of a carbanion, which is derived from R-carbon of alanine by decarboxylation, on the carbonyl carbon of polyketide acyl chain. This step is catalyzed by the pyridoxal 5'-phosphate-dependent aminoacyl transferase FUM8. The resultant 3-keto intermediate is then stereospecifically reduced to a 3-hydroxyl product by reductase FUM13. Subsequent oxidations at C-10 by the cytochrome P450 monooxygenase FUM2, C-14 and C-15 by FUM6, FUM12 or FUM15, tricarballylic esterification of the hydroxyl groups on C-14 and C-15 by acyltransferase FUM14, and C-5 hydroxylation by 2-keto-glutarate-dependent dioxygenase FUM3 furnish the biosynthesis of fumonisins. The tricarballylic moieties are most likely derived from the citric acid cycle, and their addition to the carbon backbone may involve FUM7, FUM10, FUM11 and FUM14. The chain is Aminotransferase FUM8 from Gibberella moniliformis (strain M3125 / FGSC 7600) (Maize ear and stalk rot fungus).